We begin with the raw amino-acid sequence, 221 residues long: Immediate early response gene 2 protein (221 aa).

Met1 carries the post-translational modification N-acetylmethionine. The tract at residues 105–155 (ETPALCDPPPARVSRKRRSSSDLSDGSDAGLVPSKKARLEEVEGEATSEVP) is disordered. Low complexity predominate over residues 125–136 (SDLSDGSDAGLV).

Belongs to the IER family.

The protein resides in the cytoplasm. It localises to the nucleus. Functionally, DNA-binding protein that seems to act as a transcription factor. Involved in the regulation of neuronal differentiation, acts upon JNK-signaling pathway activation and plays a role in neurite outgrowth in hippocampal cells. May mediate with FIBP FGF-signaling in the establishment of laterality in the embryo. Promotes cell motility, seems to stimulate tumor metastasis. The sequence is that of Immediate early response gene 2 protein (Ier2) from Mus musculus (Mouse).